The sequence spans 345 residues: uncharacterized protein (345 aa).

Disordered stretches follow at residues 1–24 and 296–345; these read MGLEGSEKLEHEIEQVHDNIENRK and MTAH…LNES. Acidic residues predominate over residues 304 to 323; sequence SDYDNDDDTDGIINETDYEL. The span at 324–345 shows a compositional bias: polar residues; it reads DTSQSEFATLTTSSNKSILNES.

This is an uncharacterized protein from Schizosaccharomyces pombe (strain 972 / ATCC 24843) (Fission yeast).